Reading from the N-terminus, the 252-residue chain is RNA-binding protein 7 (252 aa).

The RRM domain maps to 9-86; that stretch reads RTLFVGNLDP…RQLNIKFKTG (78 aa). Polar residues-rich tracts occupy residues 88–107 and 119–137; these read SHIN…SPAN and QMGS…PFSS. Disordered stretches follow at residues 88–137 and 171–252; these read SHIN…PFSS and QLRG…WKHF. Composition is skewed to basic and acidic residues over residues 211-230 and 237-252; these read ERNR…DRSG and PPDR…WKHF.

As to quaternary structure, component of the nuclear exosome targeting (NEXT) complex composed of MTREX, ZCCHC8, and RBM7 that directs a subset of non-coding short-lived RNAs for exosomal degradation.

The protein resides in the nucleus. It is found in the nucleoplasm. Its function is as follows. RNA-binding subunit of the trimeric nuclear exosome targeting (NEXT) complex, a complex that functions as an RNA exosome cofactor that directs a subset of non-coding short-lived RNAs for exosomal degradation. NEXT is involved in surveillance and turnover of aberrant transcripts and non-coding RNAs. Binds preferentially polyuridine sequences and associates with newly synthesized RNAs, including pre-mRNAs and short-lived exosome substrates such as promoter upstream transcripts (PROMPTs), enhancer RNAs (eRNAs), and 3'-extended products from small nuclear RNAs (snRNAs). This chain is RNA-binding protein 7, found in Danio rerio (Zebrafish).